Consider the following 139-residue polypeptide: Type II methyltransferase M.AquIB (139 aa).

Residues 1–135 form the SAM-dependent MTase C5-type domain; the sequence is MDIKNVHIKN…KAVSEQLLDV (135 aa). A disordered region spans residues 38–58; that stretch reads KTFGSTYRRLDPNQPSPTVTR.

Belongs to the class I-like SAM-binding methyltransferase superfamily. C5-methyltransferase family. Heterodimer of an alpha and a beta subunit.

The enzyme catalyses a 2'-deoxycytidine in DNA + S-adenosyl-L-methionine = a 5-methyl-2'-deoxycytidine in DNA + S-adenosyl-L-homocysteine + H(+). Functionally, a methylase, recognizes the double-stranded sequence 5'-CYCGRG-3', methylates C-1 on both strands, and protects the DNA from cleavage by the AquI endonuclease. This is Type II methyltransferase M.AquIB (aquIMB) from Picosynechococcus sp. (strain ATCC 27264 / PCC 7002 / PR-6) (Agmenellum quadruplicatum).